A 364-amino-acid polypeptide reads, in one-letter code: 3-isopropylmalate dehydrogenase (364 aa).

NAD(+) is bound at residue 76–89; it reads GPKWEKLPPNEQPE. Substrate contacts are provided by Arg97, Arg107, Arg136, and Asp225. Mg(2+) contacts are provided by Asp225, Asp249, and Asp253. An NAD(+)-binding site is contributed by 283–295; sequence GSAPDIAGKGIAN.

This sequence belongs to the isocitrate and isopropylmalate dehydrogenases family. LeuB type 1 subfamily. Homodimer. Requires Mg(2+) as cofactor. It depends on Mn(2+) as a cofactor.

Its subcellular location is the cytoplasm. It carries out the reaction (2R,3S)-3-isopropylmalate + NAD(+) = 4-methyl-2-oxopentanoate + CO2 + NADH. The protein operates within amino-acid biosynthesis; L-leucine biosynthesis; L-leucine from 3-methyl-2-oxobutanoate: step 3/4. Catalyzes the oxidation of 3-carboxy-2-hydroxy-4-methylpentanoate (3-isopropylmalate) to 3-carboxy-4-methyl-2-oxopentanoate. The product decarboxylates to 4-methyl-2 oxopentanoate. This Shewanella oneidensis (strain ATCC 700550 / JCM 31522 / CIP 106686 / LMG 19005 / NCIMB 14063 / MR-1) protein is 3-isopropylmalate dehydrogenase.